The following is a 324-amino-acid chain: Putative 12-oxophytodienoate reductase-like protein 1 (324 aa).

Met1 is modified (N-acetylmethionine). Residues 14–16 (PMA), Ala47, and Gln89 contribute to the FMN site. The segment covering 99–113 (QDCQPNGESPVSSTD) has biased composition (polar residues). The tract at residues 99–128 (QDCQPNGESPVSSTDKPFADDPSNEFTPPR) is disordered. 160–163 (HGAH) provides a ligand contact to substrate. Catalysis depends on Tyr165, which acts as the Proton donor. Arg212 is a binding site for FMN. Arg252 lines the substrate pocket. FMN is bound by residues Gly282 and 303–304 (GR).

Belongs to the NADH:flavin oxidoreductase/NADH oxidase family. FMN is required as a cofactor.

Functionally, putative oxophytodienoate reductase that may be involved in the biosynthesis or metabolism of oxylipin signaling molecules. The polypeptide is Putative 12-oxophytodienoate reductase-like protein 1 (Arabidopsis thaliana (Mouse-ear cress)).